Consider the following 384-residue polypeptide: Secreted LysM effector LysM14 (384 aa).

A signal peptide spans 1–35 (MGWSPRWKVMLRGIFNAMISIHILLSLLFAHIATA). The 49-residue stretch at 64–112 (YTYTIQEGDTCAKLAQRYQVTTSNIETWNVGSWGWPGCAKIKQGDFVCL) folds into the LysM domain. The segment at 185 to 220 (STTKSAASKTTTTSNPTTTSKTTITSKPTTTSKPTT) is disordered.

This sequence belongs to the secreted LysM effector family.

It is found in the secreted. In terms of biological role, secreted LysM effector that might have a role in sequestration of chitin oligosaccharides (breakdown products of fungal cell walls that are released during invasion and act as triggers of host immunity) to dampen host defense. The polypeptide is Secreted LysM effector LysM14 (Penicillium expansum (Blue mold rot fungus)).